The sequence spans 532 residues: Zinc finger protein ZIC 2 (532 aa).

Positions 100-255 (PHAAHVGSYS…YMRQQCIKQE (156 aa)) are necessary for interaction with MDFIC and transcriptional activation or repression. 2 positions are modified to phosphoserine: serine 191 and serine 199. Residue lysine 253 forms a Glycyl lysine isopeptide (Lys-Gly) (interchain with G-Cter in SUMO2) linkage. A C2H2-type 1; atypical zinc finger spans residues 256 to 291 (LICKWIDPEQLSNPKKSCNKTFSTMHELVTHVSVEH). The C2H2-type 2; atypical zinc-finger motif lies at 300 to 327 (HVCFWEECPREGKPFKAKYKLVNHIRVH). 3 C2H2-type zinc fingers span residues 333–357 (FPCPFPGCGKVFARSENLKIHKRTH), 363–387 (FQCEFEGCDRRFANSSDRKKHMHVH), and 393–415 (YLCKMCDKSYTHPSSLRKHMKVH). Disordered stretches follow at residues 406 to 452 (SSLR…SSSN) and 475 to 532 (HRGG…EWYV). Positions 417–435 (SSPQGSESSPAASSGYESS) are enriched in low complexity. Residues 476 to 521 (RGGGSGSGGAGGGSGGGSGSGGGGGGAGGGGGGSSGGGSGTAGGHS) are compositionally biased toward gly residues. Residues 523 to 532 (LSSNFNEWYV) are compositionally biased toward polar residues.

It belongs to the GLI C2H2-type zinc-finger protein family. In terms of assembly, interacts with RNF180. Interacts (via the C2H2-type domains 3, 4 and 5) with MDFIC (via the C2H2-type domains 3, 4 and 5); the interaction reduces its transcriptional activity. Interacts with GLI1 and GLI2. Interacts (via C2H2-type domain 3) with DHX9. Post-translationally, phosphorylated. Ubiquitinated by RNF180, leading to its degradation.

It is found in the nucleus. The protein localises to the cytoplasm. In terms of biological role, acts as a transcriptional activator or repressor. Plays important roles in the early stage of organogenesis of the CNS. Activates the transcription of the serotonin transporter SERT in uncrossed ipsilateral retinal ganglion cells (iRGCs) to refine eye-specific projections in primary visual targets. Its transcriptional activity is repressed by MDFIC. Involved in the formation of the ipsilateral retinal projection at the optic chiasm midline. Drives the expression of EPHB1 on ipsilaterally projecting growth cones. Binds to the minimal GLI-consensus sequence 5'-TGGGTGGTC-3'. Associates to the basal SERT promoter region from ventrotemporal retinal segments of retinal embryos. The protein is Zinc finger protein ZIC 2 (ZIC2) of Homo sapiens (Human).